A 411-amino-acid chain; its full sequence is Methyl-CpG-binding domain protein 2 (411 aa).

The interval 1–149 is required for interaction with DHX9 and PRMT5; it reads MRAHPGGGRC…GPRATESGKR (149 aa). The segment at 1 to 158 is disordered; sequence MRAHPGGGRC…RMDCPALPPG (158 aa). A compositionally biased stretch (basic residues) spans 77-95; that stretch reads GRGRGRGRGRGRGRGRGRG. A compositionally biased stretch (gly residues) spans 98-121; that stretch reads PSGGSGLGGDGGGCGGGGSGGGGA. The region spanning 145 to 213 is the MBD domain; it reads ESGKRMDCPA…SSFDFRTGKM (69 aa). A Phosphoserine modification is found at S181. The segment at 214–241 is disordered; that stretch reads MPSKLQKNKQRLRNDPLNQNKGKPDLNT. Over residues 229–241 the composition is skewed to polar residues; the sequence is PLNQNKGKPDLNT. The residue at position 407 (S407) is a Phosphoserine.

Heterodimer with MBD3 (via N-terminus). Component of the MeCP1 complex that contains HDAC1 and HDAC2. Component of the nucleosome remodeling and deacetylase (NuRD) repressor complex, composed of core proteins MTA1, MTA2, MTA3, RBBP4, RBBP7, HDAC1, HDAC2, MBD2, MBD3, and peripherally associated proteins CDK2AP1, CDK2AP2, GATAD2A, GATAD2B, CHD3, CHD4 and CHD5. The exact stoichiometry of the NuRD complex is unknown, and some subunits such as MBD2 and MBD3, GATAD2A and GATAD2B, and CHD3, CHD4 and CHD5 define mutually exclusive NuRD complexes. Interacts with CDK2AP1. Interacts with DHX9. Interacts with DNMT1. Interacts with GATAD2A/p66-alpha. Interacts with GATAD2B/p66-beta. Interacts with GPN1. Interacts with MIZF. Interacts with PRMT5. Interacts with SIN3A. Interacts with SPHK2. In terms of tissue distribution, highly expressed in brain, heart, kidney, stomach, testis and placenta.

It localises to the nucleus. Its subcellular location is the chromosome. Its function is as follows. Binds CpG islands in promoters where the DNA is methylated at position 5 of cytosine within CpG dinucleotides. Binds hemimethylated DNA as well. Recruits histone deacetylases and DNA methyltransferases to chromatin. Acts as a component of the histone deacetylase NuRD complex which participates in the remodeling of chromatin. Acts as a transcriptional repressor and plays a role in gene silencing. Functions as a scaffold protein, targeting GATAD2A and GATAD2B to chromatin to promote repression. May enhance the activation of some unmethylated cAMP-responsive promoters. This chain is Methyl-CpG-binding domain protein 2, found in Homo sapiens (Human).